We begin with the raw amino-acid sequence, 208 residues long: A-type ATP synthase subunit E (208 aa).

Positions 37–57 (DAEKTAEAEKNKILDNGKKQS) are disordered.

The protein belongs to the V-ATPase E subunit family. Has multiple subunits with at least A(3), B(3), C, D, E, F, H, I and proteolipid K(x).

It is found in the cell membrane. Component of the A-type ATP synthase that produces ATP from ADP in the presence of a proton gradient across the membrane. This Methanobrevibacter smithii (strain ATCC 35061 / DSM 861 / OCM 144 / PS) protein is A-type ATP synthase subunit E.